A 341-amino-acid chain; its full sequence is MRVLGLETSCDETGVALYDSERGLLADALFSQIDLHRVYGGVVPELASRDHVKRMLPLIRQVLDESGCKPADIDAIAYTAGPGLVGALLVGASCAQAMAFAWGVPAVGVHHMEGHLLAPMLEEQPPRFPFVALLVSGGHTQLVRVDGIGRYQLLGESVDDAAGEAFDKTAKLIGLGYPGGPEIARLAERGTPGRFVFPRPMTDRPGLDFSFSGLKTFSLNTWQRCVEAGDDSEQTRCDIALAFQTAVVETLVIKCRRALKQTGLKNLVIAGGVSANQALRGGLEKMLGEMKGQVFYARPRFCTDNGAMIAYAGCQRLLAGQHDGPAIAVQPRWPMESLPAV.

Residues His111 and His115 each coordinate Fe cation. Substrate contacts are provided by residues 134–138, Asp167, Gly180, and Asn276; that span reads LVSGG. Asp304 is a Fe cation binding site.

This sequence belongs to the KAE1 / TsaD family. It depends on Fe(2+) as a cofactor.

It is found in the cytoplasm. The enzyme catalyses L-threonylcarbamoyladenylate + adenosine(37) in tRNA = N(6)-L-threonylcarbamoyladenosine(37) in tRNA + AMP + H(+). In terms of biological role, required for the formation of a threonylcarbamoyl group on adenosine at position 37 (t(6)A37) in tRNAs that read codons beginning with adenine. Is involved in the transfer of the threonylcarbamoyl moiety of threonylcarbamoyl-AMP (TC-AMP) to the N6 group of A37, together with TsaE and TsaB. TsaD likely plays a direct catalytic role in this reaction. The protein is tRNA N6-adenosine threonylcarbamoyltransferase of Pseudomonas paraeruginosa (strain DSM 24068 / PA7) (Pseudomonas aeruginosa (strain PA7)).